We begin with the raw amino-acid sequence, 255 residues long: UPF0246 protein Caul_4480 (255 aa).

This sequence belongs to the UPF0246 family.

The protein is UPF0246 protein Caul_4480 of Caulobacter sp. (strain K31).